Consider the following 598-residue polypeptide: Arginine--tRNA ligase (598 aa).

The short motif at Ala139 to His149 is the 'HIGH' region element.

It belongs to the class-I aminoacyl-tRNA synthetase family. In terms of assembly, monomer.

It localises to the cytoplasm. It carries out the reaction tRNA(Arg) + L-arginine + ATP = L-arginyl-tRNA(Arg) + AMP + diphosphate. This chain is Arginine--tRNA ligase, found in Bradyrhizobium sp. (strain BTAi1 / ATCC BAA-1182).